The sequence spans 179 residues: Outer-membrane lipoprotein carrier protein (179 aa).

An N-terminal signal peptide occupies residues 1 to 22 (MEVLRRYVLVFTSLCMTLFAWG).

This sequence belongs to the LolA family. In terms of assembly, monomer.

The protein resides in the periplasm. In terms of biological role, participates in the translocation of lipoproteins from the inner membrane to the outer membrane. Only forms a complex with a lipoprotein if the residue after the N-terminal Cys is not an aspartate (The Asp acts as a targeting signal to indicate that the lipoprotein should stay in the inner membrane). This Helicobacter hepaticus (strain ATCC 51449 / 3B1) protein is Outer-membrane lipoprotein carrier protein.